The primary structure comprises 146 residues: MFGSYEKTLDSKNRLVIPSKFRDELGETFYITLGFEKSLEFRSKKSFEEFSNKISSNNLLDSKMRELSRYIFANTIEVSSDKLGRVIILDNLLKKAEIEKDAVIVGVGNKAELWSKEKFEKITNIYENEENIKKLTQELFEKGAVL.

SpoVT-AbrB domains follow at residues 4–46 and 75–118; these read SYEK…SKKS and TIEV…SKEK.

It belongs to the MraZ family. Forms oligomers.

Its subcellular location is the cytoplasm. It localises to the nucleoid. This is Transcriptional regulator MraZ from Mycoplasma mobile (strain ATCC 43663 / 163K / NCTC 11711) (Mesomycoplasma mobile).